Reading from the N-terminus, the 159-residue chain is Voltage-dependent N-type calcium channel subunit alpha-1B (159 aa).

The helical transmembrane segment at 1-5 (LVTEI) threads the bilayer. Residues 1–159 (LVTEIADTDN…LMLNLFVAVI (159 aa)) form an IV repeat. At 6–13 (ADTDNFIN) the chain is on the extracellular side. Residue Asn13 is glycosylated (N-linked (GlcNAc...) asparagine). The chain crosses the membrane as a helical span at residues 14-32 (LSFLRLFRAARLIKLLRQG). Residues 33 to 51 (YTIRILLWTFVQSFKALPY) lie on the Cytoplasmic side of the membrane. Residues 52–71 (VCLLIAMLFFIYAIIGMQVF) form a helical membrane-spanning segment. Topologically, residues 72-135 (GNIALNDETS…LTKNECGSDF (64 aa)) are extracellular. The helical transmembrane segment at 136–155 (AYFYFVSFIFLCSFLMLNLF) threads the bilayer. Over 156-159 (VAVI) the chain is Cytoplasmic.

The protein belongs to the calcium channel alpha-1 subunit (TC 1.A.1.11) family. CACNA1B subfamily. In terms of assembly, multisubunit complex consisting of alpha-1, alpha-2, beta and delta subunits in a 1:1:1:1 ratio. The channel activity is directed by the pore-forming and voltage-sensitive alpha-1 subunit. In many cases, this subunit is sufficient to generate voltage-sensitive calcium channel activity. The auxiliary subunits beta and alpha-2/delta linked by a disulfide bridge regulate the channel activity. Interacts with RIMBP2. In terms of processing, phosphorylated in vitro by CaM-kinase II, PKA, PKC and CGPK.

The protein localises to the membrane. The enzyme catalyses Ca(2+)(in) = Ca(2+)(out). Its function is as follows. Voltage-sensitive calcium channels (VSCC) mediate the entry of calcium ions into excitable cells and are also involved in a variety of calcium-dependent processes, including muscle contraction, hormone or neurotransmitter release, gene expression, cell motility, cell division and cell death. This alpha-1B subunit gives rise to N-type calcium currents. N-type calcium channels belong to the 'high-voltage activated' (HVA) group. They are involved in pain signaling. Calcium channels containing alpha-1B subunit may play a role in directed migration of immature neurons. Mediates Ca(2+) release probability at hippocampal neuronal soma and synaptic terminals. This Gallus gallus (Chicken) protein is Voltage-dependent N-type calcium channel subunit alpha-1B (CACNA1B).